Here is a 445-residue protein sequence, read N- to C-terminus: Phosphoglucosamine mutase (445 aa).

The Phosphoserine intermediate role is filled by Ser-102. The Mg(2+) site is built by Ser-102, Asp-241, Asp-243, and Asp-245. Ser-102 bears the Phosphoserine mark.

It belongs to the phosphohexose mutase family. Requires Mg(2+) as cofactor. Activated by phosphorylation.

The enzyme catalyses alpha-D-glucosamine 1-phosphate = D-glucosamine 6-phosphate. In terms of biological role, catalyzes the conversion of glucosamine-6-phosphate to glucosamine-1-phosphate. The sequence is that of Phosphoglucosamine mutase from Escherichia coli O81 (strain ED1a).